The primary structure comprises 601 residues: UBA domain-containing protein 3 (601 aa).

The region spanning 7–129 is the Arf-GAP domain; it reads ETAIRELVQS…LFLDENHSTN (123 aa). Disordered stretches follow at residues 123-158 and 289-310; these read DENH…KSRY and EPNQ…SSMG. Positions 139–156 are enriched in low complexity; the sequence is TKSSSQSSPMASTSTSKS. A UBA domain is found at 157-197; it reads RYADSLSTLHDMGFSDDSVNTHALEETNGDVTRAIEKIVQH.

The sequence is that of UBA domain-containing protein 3 (ucp3) from Schizosaccharomyces pombe (strain 972 / ATCC 24843) (Fission yeast).